A 1651-amino-acid chain; its full sequence is Roundabout homolog 1 (1651 aa).

A signal peptide spans 1–25; sequence MKWKHLPLLVMISLLTLSKKHLLLA. Topologically, residues 26–897 are extracellular; it reads QLIPDPEDLE…QQISDVVKQP (872 aa). Positions 31-66 are disordered; it reads PEDLERGNDNGTPAPTSDNDDNSLGYTGSRLRQEDF. Over residues 39–56 the composition is skewed to polar residues; sequence DNGTPAPTSDNDDNSLGY. Ig-like C2-type domains lie at 68 to 164, 170 to 257, 262 to 346, 351 to 446, and 455 to 541; these read PRIV…ASLE, DDFR…ADVT, PSFV…ATLT, PHFV…LEVT, and PVIR…AYIE. Residues C89 and C147 are joined by a disulfide bond. Residue N160 is glycosylated (N-linked (GlcNAc...) asparagine). 3 cysteine pairs are disulfide-bonded: C191–C240, C283–C330, and C372–C428. N463 is a glycosylation site (N-linked (GlcNAc...) asparagine). An intrachain disulfide couples C476 to C525. 3 Fibronectin type-III domains span residues 563 to 657, 676 to 773, and 778 to 874; these read APSK…TQDV, VVLH…TLEE, and PPRS…LDSH. Residues N790, N820, and N827 are each glycosylated (N-linked (GlcNAc...) asparagine). Residues 898-918 traverse the membrane as a helical segment; that stretch reads AFIAGIGAACWIILMVFSIWL. The Cytoplasmic segment spans residues 919–1651; that stretch reads YRHRKKRNGL…NNEELEETES (733 aa). S940 is modified (phosphoserine). The residue at position 948 (T948) is a Phosphothreonine. Y1038 carries the phosphotyrosine modification. S1055 bears the Phosphoserine mark. Y1073 carries the post-translational modification Phosphotyrosine. The tract at residues 1086-1107 is disordered; that stretch reads NMNNGGGDSSEKHWKPPGQQKQ. At Y1114 the chain carries Phosphotyrosine. Disordered stretches follow at residues 1137–1337, 1352–1397, and 1420–1651; these read PYNH…ADME, EQTP…DGSF, and RRQM…ETES. Residues 1147–1163 show a composition bias toward low complexity; the sequence is GGSYNSSDRGSSTSGSQ. Positions 1186–1196 are enriched in pro residues; that stretch reads LPPPPAHPPPH. Phosphothreonine is present on T1240. A compositionally biased stretch (polar residues) spans 1255–1269; sequence YSHQSTATLTPSPQE. Residues 1281–1293 are compositionally biased toward basic and acidic residues; the sequence is DLGHMPHPPDRRR. A compositionally biased stretch (pro residues) spans 1296–1307; sequence VSPPPPPRPISP. Phosphoserine is present on S1297. A compositionally biased stretch (acidic residues) spans 1322–1336; the sequence is MDTDAPEEEEDEADM. Over residues 1384 to 1397 the composition is skewed to low complexity; it reads SSGRSSVSSSDGSF. The span at 1438–1451 shows a compositional bias: polar residues; sequence PRPTSPVSTDSNMS. The span at 1459 to 1470 shows a compositional bias: basic residues; it reads RPTKKQKHQPGH. Over residues 1480–1490 the composition is skewed to pro residues; sequence LPPPPVPPPAI. Basic and acidic residues-rich tracts occupy residues 1516-1541 and 1549-1573; these read ARADRSSDRKGGSYKGREALDGRQVT and DPREAQEQPNEGKARGTKTAKRDLP. Over residues 1592 to 1601 the composition is skewed to polar residues; it reads FPTSNNPRDP. A compositionally biased stretch (low complexity) spans 1602-1614; it reads SSSSSMSSRGSGS. The segment covering 1642–1651 has biased composition (acidic residues); sequence NNEELEETES.

This sequence belongs to the immunoglobulin superfamily. ROBO family. Homodimer. Dimerization is mediated by the extracellular domain and is independent of SLIT liganding. Interacts with SLIT1. Interacts with SLIT2. Interacts with FLRT3. Interacts with MYO9B (via Rho-GAP domain). Post-translationally, ubiquitinated. May be deubiquitinated by USP33. In terms of tissue distribution, expressed in embryonal brain and spinal cord.

The protein localises to the cell membrane. Its subcellular location is the cell projection. The protein resides in the axon. It is found in the endoplasmic reticulum-Golgi intermediate compartment membrane. Its function is as follows. Receptor for SLIT1 and SLIT2 that mediates cellular responses to molecular guidance cues in cellular migration, including axonal navigation at the ventral midline of the neural tube and projection of axons to different regions during neuronal development. Interaction with the intracellular domain of FLRT3 mediates axon attraction towards cells expressing NTN1. In axon growth cones, the silencing of the attractive effect of NTN1 by SLIT2 may require the formation of a ROBO1-DCC complex. Plays a role in the regulation of cell migration via its interaction with MYO9B; inhibits MYO9B-mediated stimulation of RHOA GTPase activity, and thereby leads to increased levels of active, GTP-bound RHOA. May be required for lung development. This is Roundabout homolog 1 (Robo1) from Rattus norvegicus (Rat).